Reading from the N-terminus, the 535-residue chain is T-complex protein 1 subunit beta (535 aa).

Residue Ala-2 is modified to N-acetylalanine. A Phosphoserine modification is found at Ser-3. Position 13 is an N6-acetyllysine (Lys-13). Residue Gly-44 participates in ADP binding. Residue Gly-44 participates in ATP binding. Ser-60 carries the phosphoserine modification. Asp-97 provides a ligand contact to Mg(2+). Gly-98, Thr-99, Thr-100, and Ser-101 together coordinate ADP. Gly-98, Thr-99, and Thr-100 together coordinate ATP. Lys-154 bears the N6-acetyllysine mark. Residues Ser-168 and Ser-169 each contribute to the ADP site. N6-acetyllysine is present on Lys-181. Lys-248 participates in a covalent cross-link: Glycyl lysine isopeptide (Lys-Gly) (interchain with G-Cter in SUMO2). Ser-260 carries the phosphoserine modification. Residue Thr-261 is modified to Phosphothreonine. ADP-binding residues include Gly-410, Glu-495, and Lys-500. 2 residues coordinate ATP: Glu-495 and Lys-500.

The protein belongs to the TCP-1 chaperonin family. In terms of assembly, component of the chaperonin-containing T-complex (TRiC), a hexadecamer composed of two identical back-to-back stacked rings enclosing a protein folding chamber. Each ring is made up of eight different subunits: TCP1/CCT1, CCT2, CCT3, CCT4, CCT5, CCT6A/CCT6, CCT7, CCT8. Interacts with PACRG. Interacts with FLCN. Interacts with DLEC1. Interacts with SVEP1.

It localises to the cytoplasm. The enzyme catalyses ATP + H2O = ADP + phosphate + H(+). Its function is as follows. Component of the chaperonin-containing T-complex (TRiC), a molecular chaperone complex that assists the folding of actin, tubulin and other proteins upon ATP hydrolysis. The TRiC complex mediates the folding of WRAP53/TCAB1, thereby regulating telomere maintenance. As part of the TRiC complex may play a role in the assembly of BBSome, a complex involved in ciliogenesis regulating transports vesicles to the cilia. The protein is T-complex protein 1 subunit beta (Cct2) of Rattus norvegicus (Rat).